We begin with the raw amino-acid sequence, 96 residues long: uncharacterized protein (96 aa).

This is an uncharacterized protein from Methanocaldococcus jannaschii (strain ATCC 43067 / DSM 2661 / JAL-1 / JCM 10045 / NBRC 100440) (Methanococcus jannaschii).